Consider the following 1227-residue polypeptide: JNK-interacting protein 3 (1227 aa).

Positions 1–22 (MMDNDDALLNNGGPQSGAETVY) are disordered. The RH1 domain maps to 25–113 (EDNNMVMSEK…VTQYEREKSA (89 aa)). Residues 84–191 (RINQEQDVEV…TELFKNHVDY (108 aa)) are a coiled coil. A disordered region spans residues 281–323 (DALQQQHHATSPQSPDSSPVVPNVPTNVGRSTTKKEQRSDNNL). Residues 290–308 (TSPQSPDSSPVVPNVPTNV) are compositionally biased toward low complexity. Residues 363-489 (GKEVENLIME…EAVRLTEILR (127 aa)) adopt a coiled-coil conformation. An RH2 domain is found at 453 to 524 (RKRFTRVEMA…PSNRPTERVA (72 aa)). 3 disordered regions span residues 517-572 (NRPT…HPAS), 804-851 (GKVE…AEEP), and 863-889 (PLPGAPQRLSTDGNQTNNNNNSSSSSN). The span at 526–540 (GLGGGPMFRHTGGGS) shows a compositional bias: gly residues. Low complexity predominate over residues 541–550 (PAHSHGSPSR). Positions 807 to 817 (EFVRVKPKSDD) are enriched in basic and acidic residues. Positions 814–849 (KSDDEQNSNEKQQQEEEEAKEATEKSNEQLPAVSAE) form a coiled coil. Residues 879–889 (NNNNNSSSSSN) are compositionally biased toward low complexity.

It belongs to the JIP scaffold family. In terms of assembly, forms homo- and heterooligomeric complexes. Binds the TPR motif-containing C-terminal of kinesin light chain, Klc. Pre-assembled syd scaffolding complexes are then transported as a cargo of kinesin, to the required subcellular location.

It localises to the cytoplasm. The JNK-interacting protein (JIP) group of scaffold proteins selectively mediates JNK-signaling by aggregating specific components of the MAPK cascade to form a functional JNK signaling module. May function as a regulator of vesicle transport, through interactions with the JNK-signaling components and motor proteins. Syd is required for efficient kinesin-I mediated axonal transport. In Drosophila melanogaster (Fruit fly), this protein is JNK-interacting protein 3 (syd).